The primary structure comprises 340 residues: Zinc finger protein 488 (340 aa).

The interval 72-187 is important for transcriptional repression activity; that stretch reads AELALLVAPG…SVFPAGESAD (116 aa). Residues 77–180 form a disordered region; the sequence is LVAPGKPRPG…AERPELTSVF (104 aa). Over residues 82–91 the composition is skewed to pro residues; it reads KPRPGKPLPP. Basic and acidic residues predominate over residues 106–125; it reads PRMKDRQVDAQAQEREHDDP. C2H2-type zinc fingers lie at residues 275–302 and 317–339; these read NWCA…KKEH and LACP…MTSH. The Nuclear localization signal motif lies at 298–305; it reads HKKEHAGP.

The protein belongs to the krueppel C2H2-type zinc-finger protein family. As to quaternary structure, interacts with OLIG2.

The protein localises to the nucleus. In terms of biological role, transcriptional repressor. Plays a role in oligodendrocyte differentiation, together with OLIG2. Mediates Notch signaling-activated formation of oligodendrocyte precursors. Promotes differentiation of adult neural stem progenitor cells (NSPCs) into mature oligodendrocytes and contributes to remyelination following nerve injury. The polypeptide is Zinc finger protein 488 (ZNF488) (Homo sapiens (Human)).